The sequence spans 255 residues: 4-hydroxy-tetrahydrodipicolinate reductase (255 aa).

Residues 9 to 14 (GFKGKM), D35, 89 to 91 (GTT), and 115 to 118 (APNF) contribute to the NAD(+) site. H145 acts as the Proton donor/acceptor in catalysis. H146 contributes to the (S)-2,3,4,5-tetrahydrodipicolinate binding site. The Proton donor role is filled by K149. 155–156 (GT) is a binding site for (S)-2,3,4,5-tetrahydrodipicolinate.

The protein belongs to the DapB family.

The protein resides in the cytoplasm. It carries out the reaction (S)-2,3,4,5-tetrahydrodipicolinate + NAD(+) + H2O = (2S,4S)-4-hydroxy-2,3,4,5-tetrahydrodipicolinate + NADH + H(+). The enzyme catalyses (S)-2,3,4,5-tetrahydrodipicolinate + NADP(+) + H2O = (2S,4S)-4-hydroxy-2,3,4,5-tetrahydrodipicolinate + NADPH + H(+). It participates in amino-acid biosynthesis; L-lysine biosynthesis via DAP pathway; (S)-tetrahydrodipicolinate from L-aspartate: step 4/4. Its function is as follows. Catalyzes the conversion of 4-hydroxy-tetrahydrodipicolinate (HTPA) to tetrahydrodipicolinate. In Streptococcus pneumoniae (strain 70585), this protein is 4-hydroxy-tetrahydrodipicolinate reductase.